We begin with the raw amino-acid sequence, 358 residues long: Cinnamyl alcohol dehydrogenase 1 (358 aa).

Residues 21 to 349 form the Enoyl reductase (ER) domain; that stretch reads GILTPYTYTL…KNDVRYRFVV (329 aa). Cysteine 48 lines the Zn(2+) pocket. Serine 50 contacts NADP(+). 7 residues coordinate Zn(2+): histidine 70, glutamate 71, cysteine 101, cysteine 104, cysteine 107, cysteine 115, and cysteine 164. Residues threonine 168, 189–194, 212–217, threonine 252, glycine 276, and 299–301 each bind NADP(+); these read GLGGVG, SSSDKK, and SFV.

This sequence belongs to the zinc-containing alcohol dehydrogenase family. In terms of assembly, homodimer. It depends on Zn(2+) as a cofactor.

It carries out the reaction (E)-cinnamyl alcohol + NADP(+) = (E)-cinnamaldehyde + NADPH + H(+). The catalysed reaction is (E)-coniferol + NADP(+) = (E)-coniferaldehyde + NADPH + H(+). It catalyses the reaction (E)-sinapyl alcohol + NADP(+) = (E)-sinapaldehyde + NADPH + H(+). The enzyme catalyses (E)-4-coumaroyl alcohol + NADP(+) = (E)-4-coumaraldehyde + NADPH + H(+). It participates in aromatic compound metabolism; phenylpropanoid biosynthesis. Involved in lignin biosynthesis. Catalyzes the final step specific for the production of lignin monomers. Catalyzes the NADPH-dependent reduction of coniferaldehyde, 5-hydroxyconiferaldehyde, sinapaldehyde, 4-coumaraldehyde and caffeyl aldehyde to their respective alcohols. Can use coumaraldehyde and, with a lower efficiency, coniferaldehyde and sinapaldehyde as substrates. This chain is Cinnamyl alcohol dehydrogenase 1, found in Medicago truncatula (Barrel medic).